Consider the following 101-residue polypeptide: Small ribosomal subunit protein uS10 (101 aa).

It belongs to the universal ribosomal protein uS10 family. As to quaternary structure, part of the 30S ribosomal subunit.

In terms of biological role, involved in the binding of tRNA to the ribosomes. The chain is Small ribosomal subunit protein uS10 from Corynebacterium efficiens (strain DSM 44549 / YS-314 / AJ 12310 / JCM 11189 / NBRC 100395).